Here is a 131-residue protein sequence, read N- to C-terminus: Binder of sperm protein homolog 2 (131 aa).

Residues 1-22 form the signal peptide; that stretch reads MEVMSHLVHWVFLAVYMYELNA. Fibronectin type-II domains are found at residues 35 to 79 and 80 to 128; these read ISTD…YCTA and QDPP…QCSP. 4 cysteine pairs are disulfide-bonded: Cys-40–Cys-64, Cys-54–Cys-77, Cys-85–Cys-111, and Cys-99–Cys-126.

It belongs to the seminal plasma protein family. Epididymis.

The protein localises to the secreted. Binds sperm in vitro but has no effect on sperm capacitation. Also binds gelatin and heparin, but not chondroitin sulfate B or phospholipid liposomes. This is Binder of sperm protein homolog 2 from Mus musculus (Mouse).